Here is a 118-residue protein sequence, read N- to C-terminus: Large ribosomal subunit protein bL17 (118 aa).

The protein belongs to the bacterial ribosomal protein bL17 family. Part of the 50S ribosomal subunit. Contacts protein L32.

The chain is Large ribosomal subunit protein bL17 from Campylobacter fetus subsp. fetus (strain 82-40).